The primary structure comprises 279 residues: MAVSFNTTLHQPSLSPSCSIKLYSGLKPQSASFLASGYQNLNKEFYGRVYKSLQSGTGKASRSRVKMMPIGTPRVPYRNREEGTWQWVDIWNALYRERVIFIGQNIDEEFSNQILATMLYLDTLDDSRRIYMYLNGPGGDLTPSLAIYDTMKSLKSPVGTHCVGLAYNLAGFLLAAGEKGHRFAMPLSRIALQSPAGAARGQADDIQNEAKELSRIRDYLFNELAKNTGQPAERVFKDLSRVKRFNAEEAIEYGLIDKIVRPPRIKEDAPRQDESAGLG.

The N-terminal 54 residues, 1–54 (MAVSFNTTLHQPSLSPSCSIKLYSGLKPQSASFLASGYQNLNKEFYGRVYKSLQ), are a transit peptide targeting the chloroplast.

This sequence belongs to the peptidase S14 family. In terms of assembly, component of the chloroplastic Clp protease core complex which consist of at least 16 proteins: CLPP4 (3 copies), CLPP5 (3 copies), CLPR4 (2 copies), ClpP1 (1 copy), CLPP6 (1 copy), CLPR2 (1 copy), CLPT1 (1 copy), CLPT2 (1 copy) and 3 copies of CLPP3 and/or CLPR1 and/or CLPR3. The core complex is organized in two heptameric rings, one containing CLPP3,4,5,6 in a 1:2:3:1 ratio and the other CLPP1 and CLPR1,2,3,4 in a 3:1:1:1:1 ratio. In terms of tissue distribution, expressed at least in leaves and roots.

It localises to the plastid. It is found in the chloroplast. Functionally, required for chloroplast development and integrity. Involved in the regulation of plastoglobules formation. This Arabidopsis thaliana (Mouse-ear cress) protein is ATP-dependent Clp protease proteolytic subunit-related protein 2, chloroplastic.